A 351-amino-acid polypeptide reads, in one-letter code: Mediator of RNA polymerase II transcription subunit 4 (351 aa).

The stretch at Q30 to S68 forms a coiled coil. Disordered regions lie at residues T156 to L217 and P256 to D351. The span at N163–I177 shows a compositional bias: polar residues. Over residues P182–P198 the composition is skewed to low complexity. Residues R257 to R308 show a composition bias toward basic and acidic residues. Residues A262–N311 are a coiled coil. Positions A340–D351 are enriched in acidic residues.

Belongs to the Mediator complex subunit 4 family. As to quaternary structure, component of the Mediator complex.

The protein localises to the nucleus. Component of the Mediator complex, a coactivator involved in the regulated transcription of nearly all RNA polymerase II-dependent genes. Mediator functions as a bridge to convey information from gene-specific regulatory proteins to the basal RNA polymerase II transcription machinery. Mediator is recruited to promoters by direct interactions with regulatory proteins and serves as a scaffold for the assembly of a functional preinitiation complex with RNA polymerase II and the general transcription factors. In Chaetomium globosum (strain ATCC 6205 / CBS 148.51 / DSM 1962 / NBRC 6347 / NRRL 1970) (Soil fungus), this protein is Mediator of RNA polymerase II transcription subunit 4 (MED4).